The chain runs to 359 residues: 1-deoxy-D-xylulose 5-phosphate reductoisomerase (359 aa).

NADPH contacts are provided by threonine 7, glycine 8, serine 9, isoleucine 10, glycine 31, lysine 32, asparagine 33, and asparagine 111. Residue lysine 112 participates in 1-deoxy-D-xylulose 5-phosphate binding. Glutamate 113 is a binding site for NADPH. Residue aspartate 131 coordinates Mn(2+). Residues serine 132, glutamate 133, serine 155, and histidine 178 each contribute to the 1-deoxy-D-xylulose 5-phosphate site. Glutamate 133 is a binding site for Mn(2+). Glycine 184 lines the NADPH pocket. 1-deoxy-D-xylulose 5-phosphate contacts are provided by serine 191, asparagine 196, lysine 197, and glutamate 200. A Mn(2+)-binding site is contributed by glutamate 200.

Belongs to the DXR family. Mg(2+) is required as a cofactor. It depends on Mn(2+) as a cofactor.

It carries out the reaction 2-C-methyl-D-erythritol 4-phosphate + NADP(+) = 1-deoxy-D-xylulose 5-phosphate + NADPH + H(+). It participates in isoprenoid biosynthesis; isopentenyl diphosphate biosynthesis via DXP pathway; isopentenyl diphosphate from 1-deoxy-D-xylulose 5-phosphate: step 1/6. Functionally, catalyzes the NADPH-dependent rearrangement and reduction of 1-deoxy-D-xylulose-5-phosphate (DXP) to 2-C-methyl-D-erythritol 4-phosphate (MEP). This is 1-deoxy-D-xylulose 5-phosphate reductoisomerase from Campylobacter lari (strain RM2100 / D67 / ATCC BAA-1060).